The primary structure comprises 1163 residues: Leptin receptor (1163 aa).

Residues 1 to 21 (MICQKFCVVLLHWEFICVITA) form the signal peptide. Topologically, residues 22 to 837 (FNLSYPITPW…QDNTEKHQND (816 aa)) are extracellular. N-linked (GlcNAc...) asparagine glycosylation is found at Asn-23, Asn-41, Asn-56, Asn-71, Asn-79, Asn-96, and Asn-114. Disulfide bonds link Cys-37-Cys-88 and Cys-87-Cys-97. Cystine bridges form between Cys-129/Cys-140 and Cys-184/Cys-194. 5 N-linked (GlcNAc...) asparagine glycosylation sites follow: Asn-185, Asn-204, Asn-274, Asn-345, and Asn-395. One can recognise a Fibronectin type-III 1 domain in the interval 237 to 331 (PPLGLRMEIT…TPHVFTTQDV (95 aa)). Disulfide bonds link Cys-350–Cys-410 and Cys-411–Cys-416. Asn-431 carries an N-linked (GlcNAc...) asparagine glycan. Intrachain disulfides connect Cys-434-Cys-445, Cys-471-Cys-526, and Cys-486-Cys-496. The segment at 465-482 (RRSSLYCFDIPSIHPISK) is leptin-binding. Fibronectin type-III domains lie at 537 to 632 (PPSS…TVVM), 637 to 730 (PMRG…LTFS), and 738 to 831 (IVQS…QDNT). Positions 620–624 (WSNWS) match the WSXWS motif motif. 7 N-linked (GlcNAc...) asparagine glycosylation sites follow: Asn-622, Asn-657, Asn-668, Asn-686, Asn-695, Asn-726, and Asn-748. A helical membrane pass occupies residues 838 to 860 (AGLYVIVPVIISSSILLLGTLLI). At 861 to 1163 (LHQRMKKLFW…MENKMCDLTV (303 aa)) the chain is on the cytoplasmic side. The Box 1 motif motif lies at 869–877 (FWEDVPNPK). A Phosphoserine modification is found at Ser-880. The tract at residues 891–896 (ETFEHL) is required for JAK2 activation. Residues 896 to 904 (LFIKHTASV) are required for STAT3 phosphorylation. The residue at position 984 (Tyr-984) is a Phosphotyrosine; by JAK2. Tyr-1077 carries the post-translational modification Phosphotyrosine. Phosphotyrosine; by JAK2 is present on Tyr-1139.

Belongs to the type I cytokine receptor family. Type 2 subfamily. Present as a mixture of monomers and dimers. The phosphorylated receptor binds a number of SH2 domain-containing proteins such as JAK2, STAT3, PTPN11, and SOCS3. Interaction with SOCS3 inhibits JAK/STAT signaling and MAPK cascade. Post-translationally, on ligand binding, phosphorylated on two conserved C-terminal tyrosine residues (isoform B only) by JAK2. Tyr-984 is required for complete binding and activation of PTPN11, ERK/FOS activation and, for interaction with SOCS3. Phosphorylation on Tyr-1139 is required for STAT3 binding/activation. In terms of processing, on ligand binding, phosphorylated on two conserved C-terminal tyrosine residues (isoform B only) by JAK2. Tyr-984 is required for complete binding and activation of PTPN11, ERK/FOS activation,for interaction with SOCS3 and SOCS3 mediated inhibition of leptin signaling. Phosphorylation on Tyr-1139 is required for STAT3 binding/activation. Phosphorylation of Tyr-1077 has a more accessory role. As to expression, widely expressed. High expression of isoform B in liver, adipose tissue, hypothalamus and choroid plexus.

It localises to the cell membrane. The protein resides in the basolateral cell membrane. Receptor for hormone LEP/leptin. On ligand binding, mediates LEP central and peripheral effects through the activation of different signaling pathways such as JAK2/STAT3 and MAPK cascade/FOS. In the hypothalamus, LEP acts as an appetite-regulating factor that induces a decrease in food intake and an increase in energy consumption by inducing anorexinogenic factors and suppressing orexigenic neuropeptides, also regulates bone mass and secretion of hypothalamo-pituitary-adrenal hormones. In the periphery, increases basal metabolism, influences reproductive function, regulates pancreatic beta-cell function and insulin secretion, is pro-angiogenic and affects innate and adaptive immunity. Control of energy homeostasis and melanocortin production (stimulation of POMC and full repression of AgRP transcription) is mediated by STAT3 signaling, whereas distinct signals regulate NPY and the control of fertility, growth and glucose homeostasis. Involved in the regulation of counter-regulatory response to hypoglycemia by inhibiting neurons of the parabrachial nucleus. Has a specific effect on T lymphocyte responses, differentially regulating the proliferation of naive and memory T-cells. Leptin increases Th1 and suppresses Th2 cytokine production. Its function is as follows. May transport LEP across the blood-brain barrier. Binds LEP and mediates LEP endocytosis. Does not induce phosphorylation of and activate STAT3. The chain is Leptin receptor (LEPR) from Macaca mulatta (Rhesus macaque).